The primary structure comprises 436 residues: Trigger factor (436 aa).

Positions 163 to 248 (GDRVTVDFEG…VKKIEAANLP (86 aa)) constitute a PPIase FKBP-type domain.

This sequence belongs to the FKBP-type PPIase family. Tig subfamily.

The protein localises to the cytoplasm. It carries out the reaction [protein]-peptidylproline (omega=180) = [protein]-peptidylproline (omega=0). In terms of biological role, involved in protein export. Acts as a chaperone by maintaining the newly synthesized protein in an open conformation. Functions as a peptidyl-prolyl cis-trans isomerase. This chain is Trigger factor, found in Delftia acidovorans (strain DSM 14801 / SPH-1).